Here is a 439-residue protein sequence, read N- to C-terminus: ATP-dependent protease ATPase subunit HslU (439 aa).

ATP contacts are provided by residues Ile17, 59-64 (GVGKTE), Asp251, Glu317, and Arg389.

This sequence belongs to the ClpX chaperone family. HslU subfamily. A double ring-shaped homohexamer of HslV is capped on each side by a ring-shaped HslU homohexamer. The assembly of the HslU/HslV complex is dependent on binding of ATP.

It localises to the cytoplasm. Functionally, ATPase subunit of a proteasome-like degradation complex; this subunit has chaperone activity. The binding of ATP and its subsequent hydrolysis by HslU are essential for unfolding of protein substrates subsequently hydrolyzed by HslV. HslU recognizes the N-terminal part of its protein substrates and unfolds these before they are guided to HslV for hydrolysis. In Campylobacter jejuni subsp. doylei (strain ATCC BAA-1458 / RM4099 / 269.97), this protein is ATP-dependent protease ATPase subunit HslU.